A 531-amino-acid polypeptide reads, in one-letter code: Transcription factor LG2 (531 aa).

Disordered regions lie at residues 115 to 154 (RHQQ…ASSA) and 195 to 220 (LHGG…KLVD). The segment covering 116 to 154 (HQQQLHSGNSQSVGSTGTDSSSAQNTMSQMELVSPASSA) has biased composition (polar residues). The region spanning 220 to 264 (DAKTERRLAQNREAARKSRLRKKAYVQQLETSRIRLQQVEHELQR) is the bZIP domain. The basic motif stretch occupies residues 222-242 (KTERRLAQNREAARKSRLRKK). The Nuclear localization signal motif lies at 224–231 (ERRLAQNR). The interval 248–262 (LETSRIRLQQVEHEL) is leucine-zipper. The region spanning 285–499 (AAMFDMEYAR…RALSNLWASR (215 aa)) is the DOG1 domain.

It belongs to the bZIP family. As to quaternary structure, binds DNA as a dimer. As to expression, expression in meristem/developing ligule regions.

Its subcellular location is the nucleus. Functionally, required for the formation of the blade-sheath boundary in leaves. Promotes flowering. This is Transcription factor LG2 from Zea mays (Maize).